We begin with the raw amino-acid sequence, 292 residues long: Tetrahydromethanopterin:alpha-L-glutamate ligase (292 aa).

The ATP-grasp domain occupies Ser-103–Leu-286. Residues Lys-138, Gln-176 to Asp-188, and Arg-204 each bind ATP. Positions 247, 259, and 261 each coordinate Mg(2+). Positions 247, 259, and 261 each coordinate Mn(2+).

Belongs to the RimK family. MptN subfamily. Homodimer. It depends on Mg(2+) as a cofactor. Mn(2+) serves as cofactor.

The enzyme catalyses 5,6,7,8-tetrahydromethanopterin + L-glutamate + ATP = 5,6,7,8-tetrahydrosarcinapterin + ADP + phosphate + H(+). It participates in cofactor biosynthesis; 5,6,7,8-tetrahydrosarcinapterin biosynthesis. Functionally, catalyzes the ATP or GTP-dependent addition of one L-glutamate molecule to tetrahydromethanopterin, producing tetrahydrosarcinapterin. This is Tetrahydromethanopterin:alpha-L-glutamate ligase (mptN) from Methanococcus maripaludis (strain DSM 14266 / JCM 13030 / NBRC 101832 / S2 / LL).